Reading from the N-terminus, the 257-residue chain is Aquaporin TIP4-2 (257 aa).

Transmembrane regions (helical) follow at residues 32 to 52 (LVLT…AGAG) and 63 to 83 (TLAA…TAGF). The short motif at 91–93 (NPA) is the NPA 1 element. Helical transmembrane passes span 107–127 (LRAL…CILL), 150–170 (GLVM…AMIL), and 178–198 (TIGP…GGNF). The NPA 2 signature appears at 204–206 (NPA). The chain crosses the membrane as a helical span at residues 225 to 245 (WIGPLLGGSLAGFVYESLFMV).

Belongs to the MIP/aquaporin (TC 1.A.8) family. TIP (TC 1.A.8.10) subfamily.

The protein localises to the vacuole membrane. Aquaporins facilitate the transport of water and small neutral solutes across cell membranes. This is Aquaporin TIP4-2 (TIP4-2) from Zea mays (Maize).